The sequence spans 752 residues: MAP/microtubule affinity-regulating kinase 4 (752 aa).

The tract at residues Met1 to Arg36 is disordered. The 252-residue stretch at Tyr59 to Ile310 folds into the Protein kinase domain. ATP contacts are provided by residues Ile65–Val73 and Lys88. The active-site Proton acceptor is Asp181. Phosphothreonine; by LKB1 is present on Thr214. Residues Glu324–Gly368 form the UBA domain. The interval Ala385–Asn614 is disordered. The span at Ser391–Ser406 shows a compositional bias: low complexity. A phosphoserine mark is found at Ser423 and Ser543. The span at Pro544–Ser553 shows a compositional bias: low complexity. In terms of domain architecture, KA1 spans Ala703–Leu752.

The protein belongs to the protein kinase superfamily. CAMK Ser/Thr protein kinase family. SNF1 subfamily. As to quaternary structure, interacts with MAPT/TAU. Interacts with gamma-tubulin. Interacts with ODF2. Interacts with USP9X. Interacts with YWHAQ. Interacts with NLRP3; promoting NLRP3 recruitment to microtubule organizing center (MTOC). Mg(2+) serves as cofactor. In terms of processing, ubiquitinated with 'Lys-29'- and 'Lys-33'-linked polyubiquitins which appear to impede LKB1-mediated phosphorylation. Deubiquitinated by USP9X. Post-translationally, phosphorylated at Thr-214 by STK11/LKB1 in complex with STE20-related adapter-alpha (STRADA) pseudo kinase and CAB39. Phosphorylated throughout the cell cycle. As to expression, ubiquitous. Isoform 2 is brain-specific. Expressed at highest levels in brain and testis. Also expressed in heart, lung, liver, muscle, kidney and spleen.

It localises to the cytoplasm. The protein resides in the cytoskeleton. The protein localises to the microtubule organizing center. Its subcellular location is the centrosome. It is found in the cilium basal body. It localises to the cilium axoneme. The protein resides in the cell projection. The protein localises to the dendrite. It catalyses the reaction L-seryl-[protein] + ATP = O-phospho-L-seryl-[protein] + ADP + H(+). The enzyme catalyses L-threonyl-[protein] + ATP = O-phospho-L-threonyl-[protein] + ADP + H(+). Activated by phosphorylation on Thr-214. Serine/threonine-protein kinase. Phosphorylates the microtubule-associated protein MAPT/TAU. Also phosphorylates the microtubule-associated proteins MAP2 and MAP4. Involved in regulation of the microtubule network, causing reorganization of microtubules into bundles. Required for the initiation of axoneme extension during cilium assembly. Regulates the centrosomal location of ODF2 and phosphorylates ODF2 in vitro. Plays a role in cell cycle progression, specifically in the G1/S checkpoint. Reduces neuronal cell survival. Plays a role in energy homeostasis by regulating satiety and metabolic rate. Promotes adipogenesis by activating JNK1 and inhibiting the p38MAPK pathway, and triggers apoptosis by activating the JNK1 pathway. Phosphorylates mTORC1 complex member RPTOR and acts as a negative regulator of the mTORC1 complex, probably due to disruption of the interaction between phosphorylated RPTOR and the RRAGA/RRAGC heterodimer which is required for mTORC1 activation. Involved in NLRP3 positioning along microtubules by mediating NLRP3 recruitment to microtubule organizing center (MTOC) upon inflammasome activation. This is MAP/microtubule affinity-regulating kinase 4 from Homo sapiens (Human).